The sequence spans 417 residues: NADH-quinone oxidoreductase subunit D (417 aa).

This sequence belongs to the complex I 49 kDa subunit family. As to quaternary structure, NDH-1 is composed of 14 different subunits. Subunits NuoB, C, D, E, F, and G constitute the peripheral sector of the complex.

The protein localises to the cell inner membrane. The enzyme catalyses a quinone + NADH + 5 H(+)(in) = a quinol + NAD(+) + 4 H(+)(out). Its function is as follows. NDH-1 shuttles electrons from NADH, via FMN and iron-sulfur (Fe-S) centers, to quinones in the respiratory chain. The immediate electron acceptor for the enzyme in this species is believed to be ubiquinone. Couples the redox reaction to proton translocation (for every two electrons transferred, four hydrogen ions are translocated across the cytoplasmic membrane), and thus conserves the redox energy in a proton gradient. This is NADH-quinone oxidoreductase subunit D from Polynucleobacter necessarius subsp. necessarius (strain STIR1).